We begin with the raw amino-acid sequence, 123 residues long: Small ribosomal subunit protein uS13 (123 aa).

Positions 103-123 (TRTNARTRKGPKKTVGVRRKK) are disordered. Over residues 105–123 (TNARTRKGPKKTVGVRRKK) the composition is skewed to basic residues.

It belongs to the universal ribosomal protein uS13 family. Part of the 30S ribosomal subunit. Forms a loose heterodimer with protein S19. Forms two bridges to the 50S subunit in the 70S ribosome.

Located at the top of the head of the 30S subunit, it contacts several helices of the 16S rRNA. In the 70S ribosome it contacts the 23S rRNA (bridge B1a) and protein L5 of the 50S subunit (bridge B1b), connecting the 2 subunits; these bridges are implicated in subunit movement. Contacts the tRNAs in the A and P-sites. The polypeptide is Small ribosomal subunit protein uS13 (Desulforudis audaxviator (strain MP104C)).